The following is a 357-amino-acid chain: Dihydroorotate dehydrogenase (quinone) (357 aa).

FMN is bound by residues Ala61 to Lys65 and Thr85. Substrate is bound at residue Lys65. Position 110 to 114 (Asn110 to Phe114) interacts with substrate. 2 residues coordinate FMN: Asn141 and Asn172. Position 172 (Asn172) interacts with substrate. The active-site Nucleophile is Ser175. Position 177 (Asn177) interacts with substrate. FMN contacts are provided by Lys217 and Gly245. Residue Asn246–Thr247 coordinates substrate. FMN-binding positions include Gly268, Gly297, and Tyr318 to Ser319.

The protein belongs to the dihydroorotate dehydrogenase family. Type 2 subfamily. As to quaternary structure, monomer. FMN serves as cofactor.

Its subcellular location is the cell membrane. It catalyses the reaction (S)-dihydroorotate + a quinone = orotate + a quinol. It functions in the pathway pyrimidine metabolism; UMP biosynthesis via de novo pathway; orotate from (S)-dihydroorotate (quinone route): step 1/1. Catalyzes the conversion of dihydroorotate to orotate with quinone as electron acceptor. The chain is Dihydroorotate dehydrogenase (quinone) from Xanthobacter autotrophicus (strain ATCC BAA-1158 / Py2).